We begin with the raw amino-acid sequence, 352 residues long: Photosystem II D2 protein (352 aa).

Threonine 2 is modified (N-acetylthreonine). Threonine 2 carries the phosphothreonine modification. The chain crosses the membrane as a helical span at residues 40–60; it reads CAYFALGGWLTGTTFVSSWYT. Histidine 117 contacts chlorophyll a. A helical transmembrane segment spans residues 124–140; sequence GFMLRQFEIARAVQIRP. Pheophytin a is bound by residues glutamine 129 and asparagine 142. Residues 152-165 traverse the membrane as a helical segment; it reads VFVSVFLIYPLGQS. Histidine 197 is a binding site for chlorophyll a. Residues 207 to 227 form a helical membrane-spanning segment; sequence AALLCAIHGATVENTLFEDGD. Histidine 214 and phenylalanine 261 together coordinate a plastoquinone. Histidine 214 contacts Fe cation. Histidine 268 is a Fe cation binding site. The helical transmembrane segment at 278 to 294 threads the bilayer; sequence GLWMSALGVVGLALNLR.

Belongs to the reaction center PufL/M/PsbA/D family. PSII is composed of 1 copy each of membrane proteins PsbA, PsbB, PsbC, PsbD, PsbE, PsbF, PsbH, PsbI, PsbJ, PsbK, PsbL, PsbM, PsbT, PsbX, PsbY, PsbZ, Psb30/Ycf12, at least 3 peripheral proteins of the oxygen-evolving complex and a large number of cofactors. It forms dimeric complexes. The cofactor is The D1/D2 heterodimer binds P680, chlorophylls that are the primary electron donor of PSII, and subsequent electron acceptors. It shares a non-heme iron and each subunit binds pheophytin, quinone, additional chlorophylls, carotenoids and lipids. There is also a Cl(-1) ion associated with D1 and D2, which is required for oxygen evolution. The PSII complex binds additional chlorophylls, carotenoids and specific lipids..

The protein resides in the plastid. It is found in the chloroplast thylakoid membrane. The catalysed reaction is 2 a plastoquinone + 4 hnu + 2 H2O = 2 a plastoquinol + O2. Functionally, photosystem II (PSII) is a light-driven water:plastoquinone oxidoreductase that uses light energy to abstract electrons from H(2)O, generating O(2) and a proton gradient subsequently used for ATP formation. It consists of a core antenna complex that captures photons, and an electron transfer chain that converts photonic excitation into a charge separation. The D1/D2 (PsbA/PsbD) reaction center heterodimer binds P680, the primary electron donor of PSII as well as several subsequent electron acceptors. D2 is needed for assembly of a stable PSII complex. The sequence is that of Photosystem II D2 protein from Ostreococcus tauri.